Here is a 780-residue protein sequence, read N- to C-terminus: MDVETVQAGPALAAHLQLQASPKPQVKKYYFKKKTSSSHSRNGKDDVNHDSTIQPRSPLSRQSLTFDAIPTYHAGAFYEIDHDKLPPKSPIHLKSIRVVKVSECTNLDITVKFPSLQALRSFFSSYPAPGTGPELDERFVMSSNHAARILRRRVTEEELEGEVQQDSFWLIKPRLYDFAAPQQVPSRTLCLPPPPAPPAATLGLTADSCLLTTLKCDGAGWGMRRRVRYIGRHRDEAPKEASVDGYDTESSVREVQQPPATQEVKRSERNCKRKREAEASSKDNNGDEGKKNNKVQGASKKISKKAKKRTVESKDGDPRHGKDRWSAERYAAAEKSLLNIMRSRDARFGAPVMRQVLREEARKHIGDTGLLDHLLKHMAGRVPEGSVHRFRRRHNADGAMEYWLEPAELAEVRKQAGVSDPYWVPPPGWKPGDDVSLVAGDILVKRQVEELTEEVNGVKRQMEQLLCKDDGDFGAERDYSSLKEKYQRAVRANEKLEKQVLCLKDMCENVVQMNGELKKEVSAFKEKYEHIADKNDKLEEQVTYLSSSFLSFKDQLVVALKLELAPSEAVPRTALFVASGEQMTGTVIQGGQDRAERKSSFRVCKPQGKFLLPSMASGMTIGRGASSTCPAAATPGPGIPRSTSFPSMPGLPRSSRGPVEVVAAASGLDEHVMFGAHFSTPPSASSTNDAAKLQLSLPSPRSPLQPQKLFDTVTAAASGFSPQKLMHFSGLTRRDVDTSSSSSGACGSGLLEGKRVLFDADAGGISAVGTELALATPSYC.

Disordered regions lie at residues 32 to 60 (KKKT…SPLS) and 237 to 327 (APKE…RWSA). Over residues 50–60 (DSTIQPRSPLS) the composition is skewed to polar residues. Basic and acidic residues-rich tracts occupy residues 263–291 (EVKR…EGKK) and 309–327 (RTVE…RWSA). Positions 448-547 (VEELTEEVNG…LEEQVTYLSS (100 aa)) form a coiled coil.

The protein resides in the nucleus. Its subcellular location is the chromosome. In terms of biological role, plays a fundamental role in building the proper chromosome structure at the beginning of meiosis in male meiocytes. Required for the transition from leptotene to zygotene in meiocytes. Required for homologous chromosome pairing, and initiation and progression of meiotic recombination. Regulates meiocyte cytoskeleton organization. This Zea mays (Maize) protein is Protein AMEIOTIC 1.